Reading from the N-terminus, the 611-residue chain is Alkyldihydroxyacetonephosphate synthase (611 aa).

The 181-residue stretch at 137–317 folds into the FAD-binding PCMH-type domain; sequence VKNAPDLIVL…TEAVMKVHAV (181 aa). Residues 169 to 175, 237 to 243, 250 to 255, and 301 to 307 contribute to the FAD site; these read PMGGGSN, DSFEFST, TCSSGH, and EGTLGII. Substrate is bound at residue arginine 447. The Proton donor/acceptor role is filled by tyrosine 508. Residues 544 to 546 are important for enzyme activity; sequence HHH. The Microbody targeting signal signature appears at 609-611; sequence PKL.

It belongs to the FAD-binding oxidoreductase/transferase type 4 family. Homodimer. The cofactor is FAD.

The protein localises to the peroxisome. It carries out the reaction a long chain fatty alcohol + a 1-acylglycerone 3-phosphate = a 1-O-alkylglycerone 3-phosphate + a long-chain fatty acid + H(+). Its pathway is glycerolipid metabolism; ether lipid biosynthesis. Its function is as follows. Catalyzes the exchange of an acyl for a long-chain alkyl group and the formation of the ether bond in the biosynthesis of ether phospholipids. This chain is Alkyldihydroxyacetonephosphate synthase (eapA), found in Dictyostelium discoideum (Social amoeba).